The primary structure comprises 87 residues: MEKTYGKTVLPLSRVKRIIKQDEDVHYCSNASALLISVATELFVEKLATEAYQLAKLQKRKGIRYRDVEDVVRKDDQFEFLSDLFSI.

DNA polymerase epsilon is a heterotetramer consisting of cdc20/Pol2, dpb2, dpb3, and dpb4. Also forms a heterodimer consisting dpb3 and dpb4. Interacts directly with cdc20/pol2 and dpb4.

The protein localises to the nucleus. In terms of biological role, as accessory component of the DNA polymerase epsilon (DNA polymerase II) participates in chromosomal DNA replication. It is required during synthesis of the leading and lagging DNA strands at the replication fork and binds at/or near replication origins and moves along DNA with the replication fork. It has 3'-5' proofreading exonuclease activity that correct errors arising during DNA replication. It is also involved in DNA synthesis during DNA repair. The dpb3-dpb4 dimer associates with histone deacetylases, chromatin remodelers, and histones and plays a crucial role in the inheritance of histone hypoacetylation and H3K9 methylation in heterochromatin. The dpb3-dpb4 dimer is also required for the recruitment of sir2 to heterochromatin. The protein is DNA polymerase epsilon subunit C of Schizosaccharomyces pombe (strain 972 / ATCC 24843) (Fission yeast).